A 535-amino-acid polypeptide reads, in one-letter code: MTKYIFVTGGVVSSLGKGITAASLGRLLKNRGLNVTIQKFDPYINVDPGTMSPYQHGEVFVTDDGAETDLDLGHYERFIDINLNKYSNVTTGKIYSSVLQKERRGEYLGGTVQVIPHITNEIKERVYRSGRETNADVVITEIGGTVGDIESLPFLEAIRQIKSDIGRDNVMYIHCTLIPYLKAAGEMKTKPTQHSVKELRSLGIQPNIIVVRTEMPVSQDMKDKLALFCDIDTKAVIEARDADTLYAVPLSLQEQNMDQIVCDHLKLDNPAADMTEWTALVEKVRNLSKKTKIALVGKYVELQDAYISVVEALRHAGYSFDTDVEVKWVNAEHVTAENVQELVGDTDGILVPGGFGDRGVEGKIVAIQYARENKVPFLGICLGMQLASIEFARNVLGLEGANSSEINPDTPYAIIDLLPEQKDVEDLGGTLRLGLYPCKLSEETNAYNAYNEPVVYERHRHRYEFNNQFRPDMEKAGFVFSGTSPDGRLVEIIELKDHPWFVAAQFHPELVSRPNRPQPLFHDFVKASLTNKESK.

Positions 1 to 267 (MTKYIFVTGG…DQIVCDHLKL (267 aa)) are amidoligase domain. Ser-13 provides a ligand contact to CTP. Ser-13 serves as a coordination point for UTP. 14-19 (SLGKGI) contributes to the ATP binding site. Residue Tyr-54 coordinates L-glutamine. Asp-71 serves as a coordination point for ATP. Mg(2+)-binding residues include Asp-71 and Glu-141. Residues 148–150 (DIE), 188–193 (KTKPTQ), and Lys-224 contribute to the CTP site. UTP is bound by residues 188–193 (KTKPTQ) and Lys-224. Position 240-242 (240-242 (RDA)) interacts with ATP. Positions 292 to 534 (KIALVGKYVE…VKASLTNKES (243 aa)) constitute a Glutamine amidotransferase type-1 domain. An L-glutamine-binding site is contributed by Gly-354. Residue Cys-381 is the Nucleophile; for glutamine hydrolysis of the active site. L-glutamine is bound by residues 382 to 385 (LGMQ), Glu-405, and Arg-462. Active-site residues include His-507 and Glu-509.

Belongs to the CTP synthase family. In terms of assembly, homotetramer.

It carries out the reaction UTP + L-glutamine + ATP + H2O = CTP + L-glutamate + ADP + phosphate + 2 H(+). The catalysed reaction is L-glutamine + H2O = L-glutamate + NH4(+). The enzyme catalyses UTP + NH4(+) + ATP = CTP + ADP + phosphate + 2 H(+). It functions in the pathway pyrimidine metabolism; CTP biosynthesis via de novo pathway; CTP from UDP: step 2/2. Allosterically activated by GTP, when glutamine is the substrate; GTP has no effect on the reaction when ammonia is the substrate. The allosteric effector GTP functions by stabilizing the protein conformation that binds the tetrahedral intermediate(s) formed during glutamine hydrolysis. Inhibited by the product CTP, via allosteric rather than competitive inhibition. Catalyzes the ATP-dependent amination of UTP to CTP with either L-glutamine or ammonia as the source of nitrogen. Regulates intracellular CTP levels through interactions with the four ribonucleotide triphosphates. The chain is CTP synthase from Bacillus anthracis (strain A0248).